We begin with the raw amino-acid sequence, 515 residues long: Maturase K (515 aa).

Belongs to the intron maturase 2 family. MatK subfamily.

It localises to the plastid. It is found in the chloroplast. In terms of biological role, usually encoded in the trnK tRNA gene intron. Probably assists in splicing its own and other chloroplast group II introns. This is Maturase K from Picea abies (Norway spruce).